A 143-amino-acid polypeptide reads, in one-letter code: MGRHYEIVLLVHPDQSEQVQAMLERYKALIENGHGKIHRLEDWGRRQLAYPIQKLVKAHYLMMNIEVEQSVLNELVDLFRFNDAILRHLAIKRSGPYTEQSFIMKSKDDKGDKPERRRRDDDESGDVGVSNDSDNDGGNAEAA.

A disordered region spans residues 100 to 143 (QSFIMKSKDDKGDKPERRRRDDDESGDVGVSNDSDNDGGNAEAA). Residues 105–121 (KSKDDKGDKPERRRRDD) are compositionally biased toward basic and acidic residues. Over residues 126 to 143 (DVGVSNDSDNDGGNAEAA) the composition is skewed to low complexity.

This sequence belongs to the bacterial ribosomal protein bS6 family.

Functionally, binds together with bS18 to 16S ribosomal RNA. This is Small ribosomal subunit protein bS6 from Xylella fastidiosa (strain M12).